Reading from the N-terminus, the 178-residue chain is Large ribosomal subunit protein bL25 (178 aa).

This sequence belongs to the bacterial ribosomal protein bL25 family. CTC subfamily. As to quaternary structure, part of the 50S ribosomal subunit; part of the 5S rRNA/L5/L18/L25 subcomplex. Contacts the 5S rRNA. Binds to the 5S rRNA independently of L5 and L18.

In terms of biological role, this is one of the proteins that binds to the 5S RNA in the ribosome where it forms part of the central protuberance. In Campylobacter jejuni subsp. jejuni serotype O:6 (strain 81116 / NCTC 11828), this protein is Large ribosomal subunit protein bL25.